We begin with the raw amino-acid sequence, 296 residues long: MTLNNVTMRQGTVGMQPQQQRWSIPADGRHLMVQKEPHQYSHRNRHSATPEDHCRRSWSSDSTDSVISSESGNTYYRVVLIGEQGVGKSTLANIFAGVHDSMDSDCEVLGEDTYERTLMVDGESATIILLDMWENKGENEWLHDHCMQVGDAYLIVYSITDRASFEKASELRIQLRRARQTEDIPIILVGNKSDLVRCREVSVSEGRTCAVVFDCKFIETSAAVQHNVKELFEGIVRQVRLRRDSKEKNERRLAYQKRKESMPRKARRFWGKIVAKNNKNMAFKLKSKSCHDLSVL.

Disordered stretches follow at residues 1–20 (MTLN…PQQQ) and 37–68 (PHQY…SVIS). Residues 57–68 (SWSSDSTDSVIS) show a composition bias toward low complexity. Residues 82-89 (GEQGVGKS) and 191-194 (NKSD) each bind GTP. A calmodulin-binding region spans residues 266–285 (ARRFWGKIVAKNNKNMAFKL).

It belongs to the small GTPase superfamily. RGK family. In terms of assembly, interacts with calmodulin in a Ca(2+)-dependent manner. Binds ROCK1. Post-translationally, phosphorylated on tyrosine residues.

It is found in the cell membrane. Could be a regulatory protein, possibly participating in receptor-mediated signal transduction at the plasma membrane. Has guanine nucleotide-binding activity but undetectable intrinsic GTPase activity. This chain is GTP-binding protein GEM (GEM), found in Pongo abelii (Sumatran orangutan).